We begin with the raw amino-acid sequence, 502 residues long: N-sulphoglucosamine sulphohydrolase (502 aa).

The N-terminal stretch at 1 to 20 is a signal peptide; sequence MSCPVPACCALLLVLGLCRA. The Ca(2+) site is built by Asp31 and Asp32. A glycan (N-linked (GlcNAc...) asparagine) is linked at Asn41. Cys70 contacts Ca(2+). Catalysis depends on Cys70, which acts as the Nucleophile. 3-oxoalanine (Cys) is present on Cys70. Residues Asn142 and Asn151 are each glycosylated (N-linked (GlcNAc...) asparagine). Cys183 and Cys194 are disulfide-bonded. Asn264 carries an N-linked (GlcNAc...) asparagine glycan. Ca(2+)-binding residues include Asp273 and Asn274. Asn413 carries an N-linked (GlcNAc...) asparagine glycan. Cys481 and Cys495 are oxidised to a cystine.

Belongs to the sulfatase family. Requires Ca(2+) as cofactor. The conversion to 3-oxoalanine (also known as C-formylglycine, FGly), of a serine or cysteine residue in prokaryotes and of a cysteine residue in eukaryotes, is critical for catalytic activity.

The protein localises to the lysosome. The catalysed reaction is N-sulfo-D-glucosamine + H2O = D-glucosamine + sulfate. In terms of biological role, catalyzes a step in lysosomal heparan sulfate degradation. The chain is N-sulphoglucosamine sulphohydrolase (SGSH) from Homo sapiens (Human).